The chain runs to 165 residues: Phosphopantetheine adenylyltransferase (165 aa).

Threonine 9 contacts substrate. Residues 9–10 (TF) and histidine 17 contribute to the ATP site. Substrate is bound by residues lysine 41, leucine 73, and arginine 87. Residues 88–90 (GLR), glutamate 98, and 123–129 (YQFISGT) contribute to the ATP site.

This sequence belongs to the bacterial CoaD family. Homohexamer. The cofactor is Mg(2+).

Its subcellular location is the cytoplasm. It catalyses the reaction (R)-4'-phosphopantetheine + ATP + H(+) = 3'-dephospho-CoA + diphosphate. It participates in cofactor biosynthesis; coenzyme A biosynthesis; CoA from (R)-pantothenate: step 4/5. In terms of biological role, reversibly transfers an adenylyl group from ATP to 4'-phosphopantetheine, yielding dephospho-CoA (dPCoA) and pyrophosphate. In Burkholderia lata (strain ATCC 17760 / DSM 23089 / LMG 22485 / NCIMB 9086 / R18194 / 383), this protein is Phosphopantetheine adenylyltransferase.